Here is a 153-residue protein sequence, read N- to C-terminus: MSLDLALDIQHATTCDWLPTDEQFALWATTAIGNSMDEAELTIRIVDTRESQMLNSTYRGKDKPTNVLSFPFEAPPEIELPLLGDLVICAAVVENEAREQQKTLEAHWAHMVVHGCLHLLGYDHIEDEEAEEMESLETQLIEGLGFTDPYKEQ.

Positions 114, 118, and 124 each coordinate Zn(2+).

This sequence belongs to the endoribonuclease YbeY family. Zn(2+) serves as cofactor.

The protein resides in the cytoplasm. Single strand-specific metallo-endoribonuclease involved in late-stage 70S ribosome quality control and in maturation of the 3' terminus of the 16S rRNA. This Shewanella baltica (strain OS155 / ATCC BAA-1091) protein is Endoribonuclease YbeY.